Consider the following 326-residue polypeptide: Olfactory receptor 11H1 (326 aa).

The Extracellular portion of the chain corresponds to methionine 1–serine 44. Residues asparagine 13 and asparagine 18 are each glycosylated (N-linked (GlcNAc...) asparagine). Residues leucine 45–tryptophan 65 traverse the membrane as a helical segment. Residues cysteine 66 to threonine 72 lie on the Cytoplasmic side of the membrane. A helical transmembrane segment spans residues proline 73–valine 93. Over proline 94 to cysteine 112 the chain is Extracellular. A glycan (N-linked (GlcNAc...) asparagine) is linked at asparagine 106. A disulfide bridge links cysteine 112 with cysteine 194. Residues phenylalanine 113–methionine 133 traverse the membrane as a helical segment. Residues alanine 134 to lysine 158 are Cytoplasmic-facing. Residues leucine 159–serine 179 traverse the membrane as a helical segment. Over glutamine 180–threonine 216 the chain is Extracellular. The chain crosses the membrane as a helical span at residues leucine 217 to leucine 237. At lysine 238–histidine 259 the chain is on the cytoplasmic side. Residues leucine 260–glycine 280 form a helical membrane-spanning segment. Residues histidine 281–lysine 287 lie on the Extracellular side of the membrane. The chain crosses the membrane as a helical span at residues isoleucine 288–glutamine 308. Topologically, residues asparagine 309 to isoleucine 326 are cytoplasmic.

This sequence belongs to the G-protein coupled receptor 1 family.

Its subcellular location is the cell membrane. Functionally, odorant receptor. This chain is Olfactory receptor 11H1 (OR11H1), found in Homo sapiens (Human).